The sequence spans 286 residues: Ribosomal RNA small subunit methyltransferase H (286 aa).

S-adenosyl-L-methionine is bound by residues 17–19, D36, F63, D84, and Q91; that span reads AGH.

This sequence belongs to the methyltransferase superfamily. RsmH family.

It is found in the cytoplasm. It carries out the reaction cytidine(1402) in 16S rRNA + S-adenosyl-L-methionine = N(4)-methylcytidine(1402) in 16S rRNA + S-adenosyl-L-homocysteine + H(+). In terms of biological role, specifically methylates the N4 position of cytidine in position 1402 (C1402) of 16S rRNA. In Metamycoplasma arthritidis (strain 158L3-1) (Mycoplasma arthritidis), this protein is Ribosomal RNA small subunit methyltransferase H.